Here is a 4592-residue protein sequence, read N- to C-terminus: Intermembrane lipid transfer protein vps13D (4592 aa).

The 100-residue stretch at 3-102 (FESVVAEVID…SSTNVSSNYS (100 aa)) folds into the Chorein N-terminal domain. Disordered regions lie at residues 95-142 (TNVS…TASQ), 157-199 (LDKK…IDSQ), 286-307 (STTS…SSSS), 445-529 (KKDD…IKGI), 574-605 (SNST…LSPM), 826-861 (NYNN…QQGI), 1040-1083 (TTSP…KRQW), 1219-1249 (YFKN…EKKP), 1655-1717 (QQQE…QQSN), 1855-1886 (SNNN…NSLF), 1971-2001 (TSSL…TTTS), 2025-2056 (PLIN…EQQQ), and 2245-2270 (NNNN…NIIN). Composition is skewed to low complexity over residues 117-139 (SSSN…TTST) and 172-199 (KSTN…IDSQ). Positions 437–517 (KNATIKLNKK…KKKEEKGKSK (81 aa)) form a coiled coil. Basic and acidic residues predominate over residues 445-457 (KKDDKKDDKKDDI). Residues 458 to 474 (NSSSSSIGSSNSSNNTP) show a composition bias toward low complexity. Residues 475-529 (TKDKNKEKEKDKEKEKEKEKKKEKEKLKLEEKKKKKEEKGKSKSKDSKKNKIKGI) are compositionally biased toward basic and acidic residues. A compositionally biased stretch (low complexity) spans 574–591 (SNSTTTNNSNNNSSSSPN). The span at 592–603 (ILATSPSNNSLS) shows a compositional bias: polar residues. Over residues 829–838 (NQSSSSSSSS) the composition is skewed to low complexity. The segment covering 1040–1059 (TTSPTFNSLNNKPSTLQNNH) has biased composition (polar residues). A compositionally biased stretch (low complexity) spans 1064–1076 (NGNSSNNNNTDSP). Residues 1234–1244 (NTEDDEQEEEE) are compositionally biased toward acidic residues. Composition is skewed to low complexity over residues 1669–1689 (KSIN…LRKS) and 1702–1715 (QQQQ…QQQQ). The span at 2037–2048 (SKSSSSKSSSSK) shows a compositional bias: low complexity. The stretch at 2321-2354 (TLQINDLGANIISIGNKSTSIKCFLRSIRLSDSR) is one TPR 1 repeat. Disordered stretches follow at residues 2456 to 2489 (KTNN…SIST), 2862 to 2882 (AVST…NNNG), 3006 to 3035 (GEQK…SSSS), 3106 to 3129 (NSSG…SSSN), 3356 to 3384 (KLPT…KRTT), 3560 to 3580 (NSLK…HRHN), and 3630 to 3679 (STNH…SKLK). Composition is skewed to low complexity over residues 2458 to 2478 (NNNN…NNNN), 2864 to 2880 (STSN…SNNN), and 3015 to 3035 (TSTS…SSSS). Positions 3358-3384 (PTSPQTSSSSSPPPATTTTSTTTKRTT) are enriched in low complexity. A compositionally biased stretch (basic residues) spans 3569-3580 (KSKKQQQQHRHN). A compositionally biased stretch (low complexity) spans 3640–3679 (SSTFNNSSNDNINNGNSNNNTSNSLSPPSSSSSINLSKLK). A TPR 2 repeat occupies 3789–3822 (EVPKPYLGRVDIKDNDTHTSIHFYDQDTEYSPFR). 2 stretches are compositionally biased toward low complexity: residues 3872-3894 (TTTT…NNNN) and 4111-4135 (QQLQ…NPIN). Disordered regions lie at residues 3872–3897 (TTTT…NQYI) and 4105–4135 (KKHK…NPIN).

It localises to the membrane. Its function is as follows. Mediates the transfer of lipids between membranes at organelle contact sites. This Dictyostelium discoideum (Social amoeba) protein is Intermembrane lipid transfer protein vps13D (vps13D).